The primary structure comprises 100 residues: EKC/KEOPS complex subunit GON7 (100 aa).

The residue at position 1 (M1) is an N-acetylmethionine. The segment at 50 to 100 (SPVQGEAQDRVAAAPEEALDGDDEDDAEDENNIDNRTNSDGPTAKRPKPPS) is disordered. Residues 66 to 81 (EALDGDDEDDAEDENN) show a composition bias toward acidic residues.

Component of the EKC/KEOPS complex composed of at least GON7, TP53RK, TPRKB, OSGEP and LAGE3; the whole complex dimerizes.

The protein resides in the nucleus. In terms of biological role, component of the EKC/KEOPS complex that is required for the formation of a threonylcarbamoyl group on adenosine at position 37 (t(6)A37) in tRNAs that read codons beginning with adenine. The complex is probably involved in the transfer of the threonylcarbamoyl moiety of threonylcarbamoyl-AMP (TC-AMP) to the N6 group of A37. GON7 plays a supporting role to the catalytic subunit OSGEP in the complex. The protein is EKC/KEOPS complex subunit GON7 of Sus scrofa (Pig).